Consider the following 121-residue polypeptide: Natriuretic peptides B (121 aa).

The N-terminal stretch at methionine 1–serine 26 is a signal peptide. A disulfide bridge connects residues cysteine 99 and cysteine 115.

The protein belongs to the natriuretic peptide family. The precursor molecule is proteolytically cleaved by the endoprotease Furin to produce brain natriuretic peptide 45. May undergo further proteolytic cleavage by various proteases such as DPP4, MME and possibly FAP, to give rise to a variety of shorter peptides. May be cleaved at Ser-91 by the prolyl endopeptidase FAP (seprase) activity (in vitro). May be degraded by IDE. During IDE degradation, the resulting products initially increase the activation of NPR1 and can also stimulate NPR2 to produce cGMP before the fragments are completely degraded and inactivated by IDE (in vitro). As to expression, expressed in the atria and ventricles, but at much lower levels than NPPA. Expression levels in the ventricles are slightly higher than in the atria. Very low levels of expression detected in the brain, hypothalamus, lung and aorta. In terms of tissue distribution, atria (at protein level). Cardiocytes (at protein level).

It is found in the secreted. Functionally, cardiac hormone that plays a key role in mediating cardio-renal homeostasis. May also function as a paracrine antifibrotic factor in the heart. Acts by specifically binding and stimulating NPR1 to produce cGMP, which in turn activates effector proteins that drive various biological responses. Likely involved in regulating the extracellular fluid volume and maintaining the fluid-electrolyte balance through natriuresis, diuresis, kaluresis and chloruresis. The protein is Natriuretic peptides B (Nppb) of Rattus norvegicus (Rat).